We begin with the raw amino-acid sequence, 349 residues long: 11-beta-hydroxysteroid dehydrogenase 1A (349 aa).

Residues 10 to 30 (LTAPFFTFFGLCFFLPPFYFF) form a helical; Signal-anchor for type II membrane protein membrane-spanning segment. NADP(+) is bound by residues 54–80 (GASS…TARR) and aspartate 105. Substrate is bound at residue serine 184. The active-site Proton acceptor is tyrosine 197. NADP(+) contacts are provided by residues 197 to 201 (YNASK) and lysine 201.

Belongs to the short-chain dehydrogenases/reductases (SDR) family. In terms of tissue distribution, expressed in the above-ground part of seedlings, especially in the vascular tissues. Also detected in the buds and silique pedicels. Highly induced in oil-accumulating tissues of maturing seeds.

The protein localises to the lipid droplet. The protein resides in the membrane. The enzyme catalyses an 11beta-hydroxysteroid + NADP(+) = an 11-oxosteroid + NADPH + H(+). It catalyses the reaction 17beta-estradiol + NADP(+) = estrone + NADPH + H(+). It carries out the reaction corticosterone + NADP(+) = 11-dehydrocorticosterone + NADPH + H(+). The catalysed reaction is cortisone + NADPH + H(+) = cortisol + NADP(+). In terms of biological role, catalyzes 11-beta, 17-beta-hydroxysteroid and reduces 17-beta-ketosteroids. Involved in regulating plant growth and development, probably promoting or mediating brassinosteroid effects. Plays a role during seed maturation. The protein is 11-beta-hydroxysteroid dehydrogenase 1A (HSD1) of Arabidopsis thaliana (Mouse-ear cress).